Here is a 648-residue protein sequence, read N- to C-terminus: MTALLELCNVSRSYPSGEEQVAVLKDISLQIHAGEMVAIVGVSGSGKSTLMNILGCLDKPTSGTYRVAGRDVSTLDPDALAQLRREHFGFIFQRYHLLSHLTAAQNVEIPAVYAGIERKKRQARARELLLRLGLSDRVDYPPSQLSGGQQQRVSIARALMNGGQVILADEPTGALDSHSGEEVMAILRQLRDRGHTVIIVTHDPLIAAQAERIIEIHDGKIVHNPPAQEKKREQGVDAAVVNTAPGWRQFASSFREALSMAWLAMAANKMRTLLTMLGIIIGIASVVSIVVVGDAAKQMVLADIRAMGTNTIDIHPGKDFGDDNPQYRQALKYDDLVAIQKQPWVNSATPSVSKSLRLRYGNIDIAVNANGVSGDYFNVYGMSFREGNTFNAVQQQDRAQVVVLDANTRRQLFPNKANVVGEVVLVGNMPVIVIGVAEEKPSMYGNSNLLQVWLPYSTMSDRIMGQSWLNSITVRVKDGVDSDQAEQQLTRLLTLRHGKKDFFTWNMDSVLKTAEKTTYTLQLFLTLVAVISLVVGGIGVMNIMLVSVTERTREIGIRMAVGARASDVLQQFLIEAVLVCLVGGALGISLSMFIAFMLQLFLPGWEIGFSLTALASAFLCSTFTGILFGWLPARNAARLDPVDALARE.

The ABC transporter domain maps to 5 to 243; sequence LELCNVSRSY…QGVDAAVVNT (239 aa). Position 41–48 (41–48) interacts with ATP; sequence GVSGSGKS. The next 5 helical transmembrane spans lie at 273–293, 417–437, 523–543, 577–597, and 611–631; these read LLTMLGIIIGIASVVSIVVVG, ANVVGEVVLVGNMPVIVIGVA, LFLTLVAVISLVVGGIGVMNI, VLVCLVGGALGISLSMFIAFM, and LTALASAFLCSTFTGILFGWL.

This sequence belongs to the ABC transporter superfamily. Macrolide exporter (TC 3.A.1.122) family. Homodimer. Part of the tripartite efflux system MacAB-TolC, which is composed of an inner membrane transporter, MacB, a periplasmic membrane fusion protein, MacA, and an outer membrane component, TolC. The complex forms a large protein conduit and can translocate molecules across both the inner and outer membranes. Interacts with MacA.

The protein localises to the cell inner membrane. Part of the tripartite efflux system MacAB-TolC. MacB is a non-canonical ABC transporter that contains transmembrane domains (TMD), which form a pore in the inner membrane, and an ATP-binding domain (NBD), which is responsible for energy generation. Confers resistance against macrolides. This chain is Macrolide export ATP-binding/permease protein MacB, found in Salmonella typhi.